The sequence spans 103 residues: MGNIFSPTHLIVILLIVLVLFGRGKVSELMGDVAKGIKAFKKNMKEEGELLEDKLEMSDYSKTTDVRPQQSQPLSVKRAAERRKGSSSFKEGKASVAKKQRGK.

Residues 1 to 21 (MGNIFSPTHLIVILLIVLVLF) form a helical membrane-spanning segment. The disordered stretch occupies residues 60–103 (YSKTTDVRPQQSQPLSVKRAAERRKGSSSFKEGKASVAKKQRGK).

Belongs to the TatA/E family. As to quaternary structure, the Tat system comprises two distinct complexes: a TatABC complex, containing multiple copies of TatA, TatB and TatC subunits, and a separate TatA complex, containing only TatA subunits. Substrates initially bind to the TatABC complex, which probably triggers association of the separate TatA complex to form the active translocon.

The protein resides in the cell inner membrane. Functionally, part of the twin-arginine translocation (Tat) system that transports large folded proteins containing a characteristic twin-arginine motif in their signal peptide across membranes. TatA could form the protein-conducting channel of the Tat system. The sequence is that of Sec-independent protein translocase protein TatA from Bartonella quintana (strain Toulouse) (Rochalimaea quintana).